The sequence spans 370 residues: Seipin (370 aa).

The signal sequence occupies residues 1–18 (MNILLRLIVFALDPLGLG). The Cytoplasmic portion of the chain corresponds to 19–55 (RRFLIRPAVNLGWNVYDRVRSKADEKVGTVRELVLRL). A helical transmembrane segment spans residues 56 to 76 (GLIAFAVVLIIWLAVFMYAAF). Residues 77–251 (YYVYMPAISH…GLRYIMFNWP (175 aa)) lie on the Lumenal side of the membrane. The helical transmembrane segment at 252 to 272 (VLSAIVAISTNLFFILVVFLL) threads the bilayer. Residues 273 to 370 (SWYHWSDAKW…RPTKKTTADH (98 aa)) lie on the Cytoplasmic side of the membrane. Positions 346 to 370 (KSRSGKRESPDALRKRPTKKTTADH) are disordered. The segment covering 350 to 359 (GKRESPDALR) has biased composition (basic and acidic residues).

In terms of tissue distribution, widely expressed, with highest levels detected in fat body, moderate levels detected in salivary gland, midgut and muscle, and weak expression detected in brain.

It localises to the endoplasmic reticulum membrane. The protein resides in the lipid droplet. In terms of biological role, acts as a tissue-autonomous lipid modulator, preventing ectopic lipid accumulation in salivary gland (a non-adipose tissue) and in promoting lipid storage in fat tissue. Required for the growth and maturation of small nascent lipid droplets (LDs) into larger mature LDs. The polypeptide is Seipin (Drosophila melanogaster (Fruit fly)).